Consider the following 423-residue polypeptide: UPF0229 protein PSPPH_0628 (423 aa).

A disordered region spans residues 65–110 (HHGRGGKQTVVHPGNKEFTTGEHIARPQGGGGGKGPGKAGNSGEGM). Residues 92–107 (QGGGGGKGPGKAGNSG) are compositionally biased toward gly residues.

This sequence belongs to the UPF0229 family.

This Pseudomonas savastanoi pv. phaseolicola (strain 1448A / Race 6) (Pseudomonas syringae pv. phaseolicola (strain 1448A / Race 6)) protein is UPF0229 protein PSPPH_0628.